The following is a 130-amino-acid chain: Small ribosomal subunit protein uS8 (130 aa).

Belongs to the universal ribosomal protein uS8 family. Part of the 30S ribosomal subunit. Contacts proteins S5 and S12.

Its function is as follows. One of the primary rRNA binding proteins, it binds directly to 16S rRNA central domain where it helps coordinate assembly of the platform of the 30S subunit. In Ruegeria sp. (strain TM1040) (Silicibacter sp.), this protein is Small ribosomal subunit protein uS8.